The primary structure comprises 428 residues: Serine--tRNA ligase (428 aa).

L-serine is bound at residue 231 to 233 (TAE). Residues 262-264 (RRE) and Val278 each bind ATP. L-serine is bound at residue Glu285. 349 to 352 (EVSS) serves as a coordination point for ATP. Ser384 is an L-serine binding site.

The protein belongs to the class-II aminoacyl-tRNA synthetase family. Type-1 seryl-tRNA synthetase subfamily. As to quaternary structure, homodimer. The tRNA molecule binds across the dimer.

It is found in the cytoplasm. It catalyses the reaction tRNA(Ser) + L-serine + ATP = L-seryl-tRNA(Ser) + AMP + diphosphate + H(+). The enzyme catalyses tRNA(Sec) + L-serine + ATP = L-seryl-tRNA(Sec) + AMP + diphosphate + H(+). It participates in aminoacyl-tRNA biosynthesis; selenocysteinyl-tRNA(Sec) biosynthesis; L-seryl-tRNA(Sec) from L-serine and tRNA(Sec): step 1/1. In terms of biological role, catalyzes the attachment of serine to tRNA(Ser). Is also able to aminoacylate tRNA(Sec) with serine, to form the misacylated tRNA L-seryl-tRNA(Sec), which will be further converted into selenocysteinyl-tRNA(Sec). In Chlamydia trachomatis serovar L2 (strain ATCC VR-902B / DSM 19102 / 434/Bu), this protein is Serine--tRNA ligase.